The primary structure comprises 700 residues: uncharacterized protein (700 aa).

The [4Fe-4S] cluster site is built by Cys307, Cys310, Cys314, and Cys558.

The protein belongs to the AOR/FOR family. [4Fe-4S] cluster serves as cofactor. The cofactor is Mo-molybdopterin. Requires tungstopterin as cofactor.

This is an uncharacterized protein from Escherichia coli (strain K12).